The sequence spans 195 residues: Pyridoxal 5'-phosphate synthase subunit PdxT (195 aa).

An L-glutamine-binding site is contributed by 55–57 (GES). The active-site Nucleophile is the cysteine 84. L-glutamine contacts are provided by residues arginine 111 and 139–140 (IR). Residues histidine 175 and glutamate 177 each act as charge relay system in the active site.

It belongs to the glutaminase PdxT/SNO family. In the presence of PdxS, forms a dodecamer of heterodimers. Only shows activity in the heterodimer.

The enzyme catalyses aldehydo-D-ribose 5-phosphate + D-glyceraldehyde 3-phosphate + L-glutamine = pyridoxal 5'-phosphate + L-glutamate + phosphate + 3 H2O + H(+). The catalysed reaction is L-glutamine + H2O = L-glutamate + NH4(+). It participates in cofactor biosynthesis; pyridoxal 5'-phosphate biosynthesis. Its function is as follows. Catalyzes the hydrolysis of glutamine to glutamate and ammonia as part of the biosynthesis of pyridoxal 5'-phosphate. The resulting ammonia molecule is channeled to the active site of PdxS. This is Pyridoxal 5'-phosphate synthase subunit PdxT from Methanosphaerula palustris (strain ATCC BAA-1556 / DSM 19958 / E1-9c).